Here is a 108-residue protein sequence, read N- to C-terminus: UPF0060 membrane protein SAB2216c (108 aa).

4 helical membrane-spanning segments follow: residues 5-25, 31-51, 60-80, and 86-106; these read IFIF…IWLW, CSLV…IATF, VYAA…MVVD, and KYDV…LLPS.

The protein belongs to the UPF0060 family.

It localises to the cell membrane. This is UPF0060 membrane protein SAB2216c from Staphylococcus aureus (strain bovine RF122 / ET3-1).